Reading from the N-terminus, the 282-residue chain is 2-dehydro-3-deoxyphosphooctonate aldolase (282 aa).

Belongs to the KdsA family.

It is found in the cytoplasm. The enzyme catalyses D-arabinose 5-phosphate + phosphoenolpyruvate + H2O = 3-deoxy-alpha-D-manno-2-octulosonate-8-phosphate + phosphate. The protein operates within carbohydrate biosynthesis; 3-deoxy-D-manno-octulosonate biosynthesis; 3-deoxy-D-manno-octulosonate from D-ribulose 5-phosphate: step 2/3. It participates in bacterial outer membrane biogenesis; lipopolysaccharide biosynthesis. This Shewanella halifaxensis (strain HAW-EB4) protein is 2-dehydro-3-deoxyphosphooctonate aldolase.